Reading from the N-terminus, the 511-residue chain is Maturase K (511 aa).

It belongs to the intron maturase 2 family. MatK subfamily.

The protein localises to the plastid. The protein resides in the chloroplast. In terms of biological role, usually encoded in the trnK tRNA gene intron. Probably assists in splicing its own and other chloroplast group II introns. This chain is Maturase K, found in Hordeum jubatum (Foxtail barley).